Reading from the N-terminus, the 296-residue chain is Protoheme IX farnesyltransferase (296 aa).

The next 8 helical transmembrane spans lie at 8–28 (VTKP…FFLA), 35–55 (WILM…GCAI), 84–104 (AAFF…SYFT), 107–127 (VAVA…TMYF), 132–152 (VYGT…GYCA), 162–182 (AILL…IAIF), 215–235 (FAVV…FMVV), and 264–284 (VFFF…LDFN).

Belongs to the UbiA prenyltransferase family. Protoheme IX farnesyltransferase subfamily.

Its subcellular location is the cell inner membrane. The catalysed reaction is heme b + (2E,6E)-farnesyl diphosphate + H2O = Fe(II)-heme o + diphosphate. It functions in the pathway porphyrin-containing compound metabolism; heme O biosynthesis; heme O from protoheme: step 1/1. Functionally, converts heme B (protoheme IX) to heme O by substitution of the vinyl group on carbon 2 of heme B porphyrin ring with a hydroxyethyl farnesyl side group. This is Protoheme IX farnesyltransferase from Marinomonas sp. (strain MWYL1).